We begin with the raw amino-acid sequence, 692 residues long: Paramyosin (692 aa).

Residues 1–15 (MNKKRDSELAKLRKL) form a nonhelical region region. A coiled-coil region spans residues 16–692 (LEDVHIESEE…DHRVKELLLQ (677 aa)). Residues 26-57 (TAHHLRQKHQAAIQEMQDQLDQLQKAKNKSDK) are disordered.

This sequence belongs to the paramyosin family. As to quaternary structure, homodimer.

The protein resides in the cytoplasm. It is found in the myofibril. In terms of biological role, paramyosin is a major structural component of many thick filaments isolated from invertebrate muscles. The sequence is that of Paramyosin from Dermatophagoides farinae (American house dust mite).